The primary structure comprises 138 residues: Cysteine desulfuration protein SufE (138 aa).

C51 serves as the catalytic Cysteine persulfide intermediate.

It belongs to the SufE family. As to quaternary structure, homodimer. Interacts with SufS.

It localises to the cytoplasm. Its pathway is cofactor biosynthesis; iron-sulfur cluster biosynthesis. Its function is as follows. Participates in cysteine desulfuration mediated by SufS. Cysteine desulfuration mobilizes sulfur from L-cysteine to yield L-alanine and constitutes an essential step in sulfur metabolism for biosynthesis of a variety of sulfur-containing biomolecules. Functions as a sulfur acceptor for SufS, by mediating the direct transfer of the sulfur atom from the S-sulfanylcysteine of SufS, an intermediate product of cysteine desulfuration process. The chain is Cysteine desulfuration protein SufE from Citrobacter koseri (strain ATCC BAA-895 / CDC 4225-83 / SGSC4696).